Reading from the N-terminus, the 274-residue chain is Large ribosomal subunit protein uL2 (274 aa).

Disordered regions lie at residues 40–59 (SGGR…GGHK) and 223–274 (VAMN…RRSR). Composition is skewed to basic residues over residues 49–59 (VTRRHQGGGHK) and 256–274 (YRTR…RRSR).

It belongs to the universal ribosomal protein uL2 family. As to quaternary structure, part of the 50S ribosomal subunit. Forms a bridge to the 30S subunit in the 70S ribosome.

In terms of biological role, one of the primary rRNA binding proteins. Required for association of the 30S and 50S subunits to form the 70S ribosome, for tRNA binding and peptide bond formation. It has been suggested to have peptidyltransferase activity; this is somewhat controversial. Makes several contacts with the 16S rRNA in the 70S ribosome. This chain is Large ribosomal subunit protein uL2, found in Acidithiobacillus ferrooxidans (strain ATCC 23270 / DSM 14882 / CIP 104768 / NCIMB 8455) (Ferrobacillus ferrooxidans (strain ATCC 23270)).